Reading from the N-terminus, the 433-residue chain is Probable RNA 3'-terminal phosphate cyclase (433 aa).

The span at 1-10 (MGKNKNYNKN) shows a compositional bias: low complexity. The segment at 1-28 (MGKNKNYNKNQFKKSKTNNDTTVAQQQQ) is disordered. Residues 18–28 (NNDTTVAQQQQ) are compositionally biased toward polar residues. Residues Q137 and 328-332 (YLQDQ) each bind ATP. The Tele-AMP-histidine intermediate role is filled by H354. A disordered region spans residues 400 to 433 (LNNNNNNSNSNTTTTTTTTTISTTTIDNQNSEEK). Residues 401 to 425 (NNNNNNSNSNTTTTTTTTTISTTTI) show a composition bias toward low complexity.

This sequence belongs to the RNA 3'-terminal cyclase family. Type 1 subfamily.

The protein localises to the nucleus. Its subcellular location is the nucleoplasm. The catalysed reaction is a 3'-end 3'-phospho-ribonucleotide-RNA + ATP = a 3'-end 2',3'-cyclophospho-ribonucleotide-RNA + AMP + diphosphate. Functionally, catalyzes the conversion of 3'-phosphate to a 2',3'-cyclic phosphodiester at the end of RNA. The mechanism of action of the enzyme occurs in 3 steps: (A) adenylation of the enzyme by ATP; (B) transfer of adenylate to an RNA-N3'P to produce RNA-N3'PP5'A; (C) and attack of the adjacent 2'-hydroxyl on the 3'-phosphorus in the diester linkage to produce the cyclic end product. The biological role of this enzyme is unknown but it is likely to function in some aspects of cellular RNA processing. The protein is Probable RNA 3'-terminal phosphate cyclase (rtca) of Dictyostelium discoideum (Social amoeba).